The sequence spans 74 residues: Acyclotide phyb-K (74 aa).

Positions 1-24 (MARVNSLKCALCFIVLILFVQLNC) are cleaved as a signal peptide. Positions 25–43 (IPETRVMAVELSRVFLQTS) are excised as a propeptide. Cystine bridges form between C47–C64, C51–C66, and C56–C71.

In terms of processing, contains 3 disulfide bonds. Expressed in midvein, lamina and periphery of leaves (at protein level).

In terms of biological role, probably participates in a plant defense mechanism. The protein is Acyclotide phyb-K of Petunia hybrida (Petunia).